Here is a 226-residue protein sequence, read N- to C-terminus: ATP synthase subunit a (226 aa).

The next 6 membrane-spanning stretches (helical) occupy residues 18–38 (FITG…SLGA), 76–96 (YFPL…IGII), 105–125 (SWSF…FEGI), 134–154 (FAHF…IEII), 179–199 (LIML…VLFF), and 201–221 (GILQ…GAVL).

This sequence belongs to the ATPase A chain family. As to quaternary structure, F-type ATPases have 2 components, CF(1) - the catalytic core - and CF(0) - the membrane proton channel. CF(1) has five subunits: alpha(3), beta(3), gamma(1), delta(1), epsilon(1). CF(0) has three main subunits: a(1), b(2) and c(9-12). The alpha and beta chains form an alternating ring which encloses part of the gamma chain. CF(1) is attached to CF(0) by a central stalk formed by the gamma and epsilon chains, while a peripheral stalk is formed by the delta and b chains.

It is found in the cell inner membrane. In terms of biological role, key component of the proton channel; it plays a direct role in the translocation of protons across the membrane. The protein is ATP synthase subunit a of Helicobacter acinonychis (strain Sheeba).